Reading from the N-terminus, the 106-residue chain is Biogenesis of lysosome-related organelles complex 1 subunit 4 (106 aa).

Positions Thr53 to Gln106 form a coiled coil.

Belongs to the BLOC1S4 family. As to quaternary structure, component of the biogenesis of lysosome-related organelles complex-1 (BLOC-1) composed at least of blos-1, blos-2, blos-4, dsbn-1, glo-2, mutd-1 and snpn-1. Interacts with glo-2.

Its function is as follows. Component of the biogenesis of lysosome-related organelles complex-1 (BLOC-1) involved in gut granule biogenesis. In Caenorhabditis elegans, this protein is Biogenesis of lysosome-related organelles complex 1 subunit 4 (blos-4).